The sequence spans 207 residues: MRADENNTLDLNNLPDDPSRDIFPFFEEGFSSSSSSGGFREKQTKDGKEYECRFCSLKFFKSQALGGHMNRHRQERETESLNKARELVLRNDSFPPHQGPPSFSYHQGDVHIGDLTQFKPMMYPPRHFSLPGSSSILQLQPPYLYPPLSSPFPQHNTNIGNNGTRHQTLTNSVCGGRALPDSSYTFIGAPVANGSRVAPHLPPHHGL.

Residues M1 to D16 show a composition bias toward low complexity. Residues M1–R20 form a disordered region. The C2H2-type zinc finger occupies Y50–H72.

In terms of tissue distribution, expressed in the emerging leaf, stamen and carpel primordia. Not expressed in the apical shoot meristem (SAM).

The protein resides in the nucleus. Functionally, acts with JAG to promote growth and patterning in stamens and carpels. Promotes the growth of the abaxial and adaxial sides of floral organs. Promotes the growth of the pollen-bearing microsporangia in anthers, the carpel walls of the gynoecium and the establishment of the correct number of cell layers in carpel walls. Promotes leaf blade growth and trichome development. In Arabidopsis thaliana (Mouse-ear cress), this protein is Zinc finger protein JAGGED-like (JGL).